Reading from the N-terminus, the 89-residue chain is Small ribosomal subunit protein bS20 (89 aa).

The interval 1-20 (MANHKSAEKRARQTIKRTER) is disordered.

This sequence belongs to the bacterial ribosomal protein bS20 family.

Binds directly to 16S ribosomal RNA. The polypeptide is Small ribosomal subunit protein bS20 (Campylobacter concisus (strain 13826)).